The chain runs to 135 residues: Ribonuclease P protein component (135 aa).

This sequence belongs to the RnpA family. In terms of assembly, consists of a catalytic RNA component (M1 or rnpB) and a protein subunit.

The catalysed reaction is Endonucleolytic cleavage of RNA, removing 5'-extranucleotides from tRNA precursor.. Functionally, RNaseP catalyzes the removal of the 5'-leader sequence from pre-tRNA to produce the mature 5'-terminus. It can also cleave other RNA substrates such as 4.5S RNA. The protein component plays an auxiliary but essential role in vivo by binding to the 5'-leader sequence and broadening the substrate specificity of the ribozyme. This chain is Ribonuclease P protein component, found in Pseudomonas aeruginosa (strain ATCC 15692 / DSM 22644 / CIP 104116 / JCM 14847 / LMG 12228 / 1C / PRS 101 / PAO1).